The primary structure comprises 892 residues: Inner centromere protein B (892 aa).

8 disordered regions span residues 50-124, 160-182, 255-286, 305-470, 502-555, 569-687, 702-760, and 797-819; these read AEPE…KRMT, EHERRSAEQKLRESEIEDSEMKT, LVNEQPLNLSNESATPTGSKSDRRSVRRSLVV, KRES…PPPH, KRNT…RRED, QLEE…RERE, ERAA…AAAA, and NYGMDLNSDDSTDDESQPRKPIP. Basic residues predominate over residues 60-69; sequence SQKRRRKKRT. A compositionally biased stretch (low complexity) spans 90–99; the sequence is SANWSSSVRR. The segment covering 259 to 272 has biased composition (polar residues); it reads QPLNLSNESATPTG. Basic and acidic residues predominate over residues 305–315; the sequence is KRESMTREAVR. A compositionally biased stretch (basic residues) spans 316-326; sequence KSIRQSISKKK. Over residues 332-343 the composition is skewed to low complexity; that stretch reads SSTSSQRSCHSS. Over residues 431 to 444 the composition is skewed to basic and acidic residues; sequence RAVDELSDDERPSE. Positions 455-470 are enriched in pro residues; the sequence is PSPPCPPSKIVKPPPH. Composition is skewed to basic and acidic residues over residues 509-555, 569-602, 609-687, and 702-754; these read PDPK…RRED, QLEEEKKKKFEQKFAQIDEKSEKVREDRMAEEKA, KKQE…RERE, and ERAA…KAKE. Residues 512–725 form an SAH region; it reads KSEEKERQRL…EERKKREQQQ (214 aa). The IN box stretch occupies residues 802–876; sequence LNSDDSTDDE…RTSSAVWHSP (75 aa). S869 and S870 each carry phosphoserine.

Belongs to the INCENP family. As to quaternary structure, component of the CPC at least composed of survivin/birc5, incenp, cdca8/borealin and/or cdca9/dasra-A, and aurkb/aurora-B. Interacts (via C-terminus) with aurkb (via N-terminus and kinase domain). Interacts (via N-terminus) with birc5.1, birc5.2, cdca8 and cdca9. Interacts with mtus1.

It is found in the nucleus. The protein resides in the chromosome. It localises to the centromere. Its subcellular location is the cytoplasm. The protein localises to the cytoskeleton. It is found in the spindle. The protein resides in the midbody. It localises to the kinetochore. Its function is as follows. Component of the chromosomal passenger complex (CPC), a complex that acts as a key regulator of mitosis. The CPC complex has essential functions at the centromere in ensuring correct chromosome alignment and segregation and is required for chromatin-induced microtubule stabilization and spindle assembly. Acts as a scaffold regulating CPC localization and activity. The C-terminus associates with aurkb/aurora-B, the N-terminus associated with cdca8/borealin and/or cdca9/dasra-A tethers the CPC to the inner centromere, and the microtubule binding activity within the central SAH domain directs aurkb/aurora-B toward substrates near microtubules. Activates aurkb. The polypeptide is Inner centromere protein B (incenp-b) (Xenopus laevis (African clawed frog)).